We begin with the raw amino-acid sequence, 138 residues long: Transcription antitermination protein NusB (138 aa).

This sequence belongs to the NusB family.

Its function is as follows. Involved in transcription antitermination. Required for transcription of ribosomal RNA (rRNA) genes. Binds specifically to the boxA antiterminator sequence of the ribosomal RNA (rrn) operons. In Coxiella burnetii (strain Dugway 5J108-111), this protein is Transcription antitermination protein NusB.